The sequence spans 360 residues: DNA replication and repair protein RecF (360 aa).

Residue 30–37 coordinates ATP; that stretch reads GQNGSGKT.

It belongs to the RecF family.

It is found in the cytoplasm. Functionally, the RecF protein is involved in DNA metabolism; it is required for DNA replication and normal SOS inducibility. RecF binds preferentially to single-stranded, linear DNA. It also seems to bind ATP. This is DNA replication and repair protein RecF from Shewanella oneidensis (strain ATCC 700550 / JCM 31522 / CIP 106686 / LMG 19005 / NCIMB 14063 / MR-1).